A 314-amino-acid chain; its full sequence is Olfactory receptor 10A3 (314 aa).

Over 1–25 (MKRQNQSCVVEFILLGFSNFPELQV) the chain is Extracellular. Residue N5 is glycosylated (N-linked (GlcNAc...) asparagine). Residues 26–46 (QLFGVFLVIYVVTLMGNAIIT) form a helical membrane-spanning segment. The Cytoplasmic portion of the chain corresponds to 47-54 (VIISLNQS). The helical transmembrane segment at 55–75 (LHVPMYLFLLNLSVVEVSFSA) threads the bilayer. The Extracellular segment spans residues 76–99 (VITPEMLVVLSTEKTMISFVGCFA). A disulfide bridge connects residues C97 and C189. A helical membrane pass occupies residues 100–120 (QMYFILLFGGTECFLLGAMAY). At 121–139 (DRFAAICHPLNYPVIMNRG) the chain is on the cytoplasmic side. Residues 140–160 (VFMKLVIFSWISGIMVATVQT) traverse the membrane as a helical segment. The Extracellular segment spans residues 161 to 197 (TWVFSFPFCGPNEINHLFCETPPVLELVCADTFLFEI). Residues 198-217 (YAFTGTILIVMVPFLLILLS) form a helical membrane-spanning segment. Residues 218 to 237 (YIRVLFAILKMPSTTGRQKA) are Cytoplasmic-facing. The chain crosses the membrane as a helical span at residues 238 to 258 (FSTCASHLTSVTLFYGTANMT). Topologically, residues 259-271 (YLQPKSGYSPETK) are extracellular. The chain crosses the membrane as a helical span at residues 272–292 (KLISLAYTLLTPLLNPLIYSL). The Cytoplasmic segment spans residues 293–314 (RNSEMKRTLIKLWRRKVILHTF).

It belongs to the G-protein coupled receptor 1 family.

The protein resides in the cell membrane. Odorant receptor. This Homo sapiens (Human) protein is Olfactory receptor 10A3 (OR10A3).